We begin with the raw amino-acid sequence, 245 residues long: Uracil-DNA glycosylase (245 aa).

Aspartate 82 functions as the Proton acceptor in the catalytic mechanism.

It belongs to the uracil-DNA glycosylase (UDG) superfamily. UNG family.

The protein resides in the cytoplasm. It carries out the reaction Hydrolyzes single-stranded DNA or mismatched double-stranded DNA and polynucleotides, releasing free uracil.. In terms of biological role, excises uracil residues from the DNA which can arise as a result of misincorporation of dUMP residues by DNA polymerase or due to deamination of cytosine. This Deinococcus geothermalis (strain DSM 11300 / CIP 105573 / AG-3a) protein is Uracil-DNA glycosylase.